The chain runs to 150 residues: MLLDDLYEIVEPITADLGYILWGIEVVGAGKLTIRIFIDHENGVSVDDCQVVSKEVSAIFDVEDPISDKYVLEVSSPGMNRQIFNIIQAQALVGFNVKAVTLTPVESQTKFKGVLERVEGNNVILKLDDGREVSFDFDELKKFRVSPDFS.

Belongs to the RimP family.

The protein localises to the cytoplasm. Required for maturation of 30S ribosomal subunits. In Francisella philomiragia subsp. philomiragia (strain ATCC 25017 / CCUG 19701 / FSC 153 / O#319-036), this protein is Ribosome maturation factor RimP.